The primary structure comprises 100 residues: Mitochondrial import inner membrane translocase subunit Tim10 B (100 aa).

The Twin CX3C motif signature appears at cysteine 25–cysteine 49. 2 disulfides stabilise this stretch: cysteine 25–cysteine 49 and cysteine 29–cysteine 45.

The protein belongs to the small Tim family. As to quaternary structure, component of the TIM22 complex, which core is composed of TIMM22, associated with TIMM10 (TIMM10A and/or TIMM10B), TIMM9, AGK and TIMM29.

The protein localises to the mitochondrion inner membrane. Its function is as follows. Component of the TIM22 complex, a complex that mediates the import and insertion of multi-pass transmembrane proteins into the mitochondrial inner membrane. The TIM22 complex forms a twin-pore translocase that uses the membrane potential as the external driving force. In the TIM22 complex, it may act as a docking point for the soluble 70 kDa complex that guides the target proteins in transit through the aqueous mitochondrial intermembrane space. The polypeptide is Mitochondrial import inner membrane translocase subunit Tim10 B (Timm10b) (Mus musculus (Mouse)).